Here is a 771-residue protein sequence, read N- to C-terminus: Receptor like protein 22 (771 aa).

A signal peptide spans 1–20 (MSNLRLRLLSLVSILYCIAA). At 21–729 (LRCRPDQTET…EEEEILEWRA (709 aa)) the chain is on the extracellular side. 6 N-linked (GlcNAc...) asparagine glycosylation sites follow: Asn-46, Asn-58, Asn-80, Asn-93, Asn-134, and Asn-158. LRR repeat units lie at residues 86–110 (LSHL…AFGQ), 112–135 (NNLE…IRNL), 136–159 (TKLT…VQNL), 160–183 (TKLL…FFTM), 185–206 (FLSY…SNSS), 207–230 (SKLE…VLRL), 232–254 (NLRY…IFSP), 255–281 (LQSL…DFPK), 283–303 (MEIL…LKSL), 304–327 (KKLW…IWSL), 329–350 (LLVS…LDHV), and 353–377 (NSSV…PVSI). Asn-204 is a glycosylation site (N-linked (GlcNAc...) asparagine). N-linked (GlcNAc...) asparagine glycosylation is present at Asn-242. Residue Asn-292 is glycosylated (N-linked (GlcNAc...) asparagine). Residues Asn-337, Asn-344, Asn-353, Asn-379, Asn-384, Asn-397, Asn-410, Asn-421, Asn-466, and Asn-481 are each glycosylated (N-linked (GlcNAc...) asparagine). The stretch at 378 to 397 (INLSAWNNSFTGDIPLSVCN) is one LRR 13; degenerate repeat. 10 LRR repeats span residues 398–419 (RTSL…PPCM), 420–443 (GNFT…FYSG), 445–467 (LTQT…LLNC), 469–491 (FIRF…LKAL), 492–516 (PNLK…DQSS), 519–543 (FPKL…YFAN), 588–612 (LTFY…IGLL), 613–636 (KTLI…FANV), 637–660 (TELE…LGRL), and 662–685 (YLAY…QIIG). Asn-543 carries N-linked (GlcNAc...) asparagine glycosylation. Residues Asn-619, Asn-622, and Asn-635 are each glycosylated (N-linked (GlcNAc...) asparagine). A helical transmembrane segment spans residues 730-750 (AAIGYGPGVLFGLAIGHVVAL). Over 751–771 (YKPGWFIKNNGQNRLRGIRHP) the chain is Cytoplasmic.

Belongs to the RLP family.

It is found in the cell membrane. In Arabidopsis thaliana (Mouse-ear cress), this protein is Receptor like protein 22.